The primary structure comprises 252 residues: Probable transcriptional regulatory protein Haur_3030 (252 aa).

It belongs to the TACO1 family.

Its subcellular location is the cytoplasm. This chain is Probable transcriptional regulatory protein Haur_3030, found in Herpetosiphon aurantiacus (strain ATCC 23779 / DSM 785 / 114-95).